Reading from the N-terminus, the 152-residue chain is MAKSILLINGPNLNLLGTREPSIYGSTTLPQVVESASSQCSRLSITFSHIQSNHEGVLIDRIHEARGNVDAIVINPGALTHTSVGLRDALVGVDIPFVEVHISNIHKREAFRHHSYLSDKAEAVICGLGTYGYEAAIEYAARHIKPKGEAQL.

Catalysis depends on tyrosine 24, which acts as the Proton acceptor. Substrate contacts are provided by asparagine 75, histidine 81, and aspartate 88. Histidine 101 functions as the Proton donor in the catalytic mechanism. Substrate-binding positions include 102–103 (IS) and arginine 112.

This sequence belongs to the type-II 3-dehydroquinase family. In terms of assembly, homododecamer. Adopts a ring-like structure, composed of an arrangement of two hexameric rings stacked on top of one another.

The catalysed reaction is 3-dehydroquinate = 3-dehydroshikimate + H2O. It participates in aromatic compound metabolism; 3,4-dihydroxybenzoate biosynthesis; 3,4-dihydroxybenzoate from 3-dehydroquinate: step 1/2. Is involved in the catabolism of quinate. Allows the utilization of quinate as carbon source via the beta-ketoadipate pathway. In Phaeosphaeria nodorum (strain SN15 / ATCC MYA-4574 / FGSC 10173) (Glume blotch fungus), this protein is Catabolic 3-dehydroquinase.